Consider the following 98-residue polypeptide: Keratin, high sulfur matrix protein, IIIB4 (98 aa).

N-acetylalanine is present on Ala1.

It belongs to the KRTAP type 3 family. As to quaternary structure, interacts with wool keratins. As to expression, wool.

In the wool cortex, wool keratin intermediate filaments are embedded in an interfilamentous matrix, consisting of hair keratin-associated proteins (KRTAP), which are essential for the formation of a rigid and resistant wool shaft through their extensive disulfide bond cross-linking with abundant cysteine residues of wool keratins. The matrix proteins include the high-sulfur and high-glycine-tyrosine keratins. This Ovis aries (Sheep) protein is Keratin, high sulfur matrix protein, IIIB4.